A 729-amino-acid chain; its full sequence is Fatty acid oxidation complex subunit alpha (729 aa).

The segment at 1–189 is enoyl-CoA hydratase/isomerase; it reads MLYKGDTLYL…KIGLVDGVVA (189 aa). Residue Asp296 coordinates substrate. A 3-hydroxyacyl-CoA dehydrogenase region spans residues 311–729; it reads ETPKHAAVLG…ARPVGALKTA (419 aa). Residues Met324, Asp343, 400–402, Lys407, and Ser429 each bind NAD(+); that span reads VVE. Residue His450 is the For 3-hydroxyacyl-CoA dehydrogenase activity of the active site. Asn453 is a binding site for NAD(+). Asn500 and Tyr660 together coordinate substrate.

This sequence in the N-terminal section; belongs to the enoyl-CoA hydratase/isomerase family. In the C-terminal section; belongs to the 3-hydroxyacyl-CoA dehydrogenase family. In terms of assembly, heterotetramer of two alpha chains (FadB) and two beta chains (FadA).

It carries out the reaction a (3S)-3-hydroxyacyl-CoA + NAD(+) = a 3-oxoacyl-CoA + NADH + H(+). It catalyses the reaction a (3S)-3-hydroxyacyl-CoA = a (2E)-enoyl-CoA + H2O. The enzyme catalyses a 4-saturated-(3S)-3-hydroxyacyl-CoA = a (3E)-enoyl-CoA + H2O. The catalysed reaction is (3S)-3-hydroxybutanoyl-CoA = (3R)-3-hydroxybutanoyl-CoA. It carries out the reaction a (3Z)-enoyl-CoA = a 4-saturated (2E)-enoyl-CoA. It catalyses the reaction a (3E)-enoyl-CoA = a 4-saturated (2E)-enoyl-CoA. Its pathway is lipid metabolism; fatty acid beta-oxidation. In terms of biological role, involved in the aerobic and anaerobic degradation of long-chain fatty acids via beta-oxidation cycle. Catalyzes the formation of 3-oxoacyl-CoA from enoyl-CoA via L-3-hydroxyacyl-CoA. It can also use D-3-hydroxyacyl-CoA and cis-3-enoyl-CoA as substrate. In Klebsiella pneumoniae (strain 342), this protein is Fatty acid oxidation complex subunit alpha.